We begin with the raw amino-acid sequence, 129 residues long: Azurin-1 (129 aa).

The Plastocyanin-like domain occupies 1 to 129 (AECSVDIAGN…LMKGVLKLVD (129 aa)). The cysteines at positions 3 and 26 are disulfide-linked. Residues His46, Cys112, His117, and Met121 each coordinate Cu cation.

The protein resides in the periplasm. In terms of biological role, transfers electrons from cytochrome c551 to cytochrome oxidase. This is Azurin-1 from Alcaligenes xylosoxydans xylosoxydans (Achromobacter xylosoxidans).